A 247-amino-acid polypeptide reads, in one-letter code: Protein NipSnap homolog 3B (247 aa).

4 positions are modified to N6-succinyllysine: Lys45, Lys48, Lys57, and Lys166.

The protein belongs to the NipSnap family.

It is found in the cytoplasm. It localises to the cytosol. The sequence is that of Protein NipSnap homolog 3B (Nipsnap3b) from Mus musculus (Mouse).